The following is a 98-amino-acid chain: uncharacterized protein (98 aa).

It belongs to the HesB/IscA family.

This is an uncharacterized protein from Staphylococcus aureus (strain USA300).